Reading from the N-terminus, the 360-residue chain is DNA replication and repair protein RecF (360 aa).

An ATP-binding site is contributed by 30–37 (GHNGSGKT).

Belongs to the RecF family.

It is found in the cytoplasm. Its function is as follows. The RecF protein is involved in DNA metabolism; it is required for DNA replication and normal SOS inducibility. RecF binds preferentially to single-stranded, linear DNA. It also seems to bind ATP. The sequence is that of DNA replication and repair protein RecF from Actinobacillus pleuropneumoniae serotype 3 (strain JL03).